Consider the following 1798-residue polypeptide: Laminin subunit beta-2 (1798 aa).

The first 32 residues, 1–32, serve as a signal peptide directing secretion; the sequence is MELTSRERGRGQPLPWELRLGLLLSVLAATLA. A Laminin N-terminal domain is found at 43-282; the sequence is SRGSCYPATG…ALYELVVRGN (240 aa). N-linked (GlcNAc...) asparagine glycosylation is present at Asn248. 19 disulfides stabilise this stretch: Cys283–Cys292, Cys285–Cys310, Cys312–Cys321, Cys324–Cys344, Cys347–Cys356, Cys349–Cys374, Cys377–Cys386, Cys389–Cys407, Cys410–Cys423, Cys412–Cys438, Cys440–Cys449, Cys452–Cys467, Cys470–Cys484, Cys472–Cys491, Cys493–Cys502, Cys505–Cys519, Cys522–Cys534, Cys524–Cys541, and Cys543–Cys552. Laminin EGF-like domains are found at residues 283-346, 347-409, 410-469, and 470-521; these read CFCY…ACRK, CECH…VCRS, CDCD…GCRR, and CQCN…GCRP. A glycan (N-linked (GlcNAc...) asparagine) is linked at Asn368. The 31-residue stretch at 522–552 folds into the Laminin EGF-like 5; truncated domain; it reads CDCDVGGALDPQCDEGTGQCHCRQHMVGRRC. The Laminin IV type B domain maps to 561–777; the sequence is RPFLDHLIWE…LLISLSTLIY (217 aa). 32 disulfide bridges follow: Cys783–Cys795, Cys785–Cys802, Cys804–Cys813, Cys816–Cys828, Cys831–Cys843, Cys833–Cys850, Cys852–Cys861, Cys864–Cys874, Cys877–Cys886, Cys879–Cys893, Cys896–Cys905, Cys908–Cys924, Cys927–Cys943, Cys929–Cys954, Cys956–Cys965, Cys968–Cys983, Cys986–Cys1000, Cys988–Cys1007, Cys1010–Cys1019, Cys1022–Cys1035, Cys1038–Cys1058, Cys1040–Cys1065, Cys1067–Cys1076, Cys1079–Cys1092, Cys1095–Cys1107, Cys1097–Cys1114, Cys1116–Cys1125, Cys1128–Cys1140, Cys1143–Cys1155, Cys1145–Cys1162, Cys1164–Cys1173, and Cys1176–Cys1187. 8 consecutive Laminin EGF-like domains span residues 783-830, 831-876, 877-926, 927-985, 986-1037, 1038-1094, 1095-1142, and 1143-1189; these read CQCN…GCQA, CQCS…SCRP, CVCN…QCRP, CPCP…RCQL, CECS…SCHR, CTCN…GCQP, CACH…QCHA, and CDCD…ACHP. Asn1085 carries an N-linked (GlcNAc...) asparagine glycan. Positions 1190 to 1409 are domain II; that stretch reads CHACFGDWDR…LSLTDINELV (220 aa). N-linked (GlcNAc...) asparagine glycans are attached at residues Asn1249, Asn1308, and Asn1348. Positions 1253–1319 form a coiled coil; that stretch reads ASTAQLVEAT…TLRQLDQHLD (67 aa). The tract at residues 1338–1364 is disordered; that stretch reads SQSAEAERRANTSALAVPSPVSNSASA. A compositionally biased stretch (low complexity) spans 1350–1363; it reads SALAVPSPVSNSAS. The segment at 1410–1442 is domain alpha; sequence CGAPGDAPCATSPCGGAGCRDEDGQPRCGGLSC. The segment at 1443–1798 is domain I; that stretch reads NGAAATADLA…LQVQIYNTCQ (356 aa). The stretch at 1472 to 1526 forms a coiled coil; sequence SILSRVAETRRQASEAQQRAQAALDKANASRGQVEQANQELQELIQSVKDFLNQE. A glycan (N-linked (GlcNAc...) asparagine) is linked at Asn1499. Position 1532 is a phosphoserine; by FAM20C (Ser1532). Positions 1577–1790 form a coiled coil; the sequence is VGDVRRAEQL…RSVLQAINLQ (214 aa).

In terms of assembly, laminin is a complex glycoprotein, consisting of three different polypeptide chains (alpha, beta, gamma), which are bound to each other by disulfide bonds into a cross-shaped molecule comprising one long and three short arms with globules at each end. Beta-2 is a subunit of laminin-3 (laminin-121 or S-laminin), laminin-4 (laminin-221 or S-merosin), laminin-7 (laminin-321 or KS-laminin), laminin-9 (laminin-421), laminin-11 (laminin-521), laminin-14 (laminin-423) and laminin-15 (laminin-523).

The protein resides in the secreted. It is found in the extracellular space. It localises to the extracellular matrix. Its subcellular location is the basement membrane. Its function is as follows. Binding to cells via a high affinity receptor, laminin is thought to mediate the attachment, migration and organization of cells into tissues during embryonic development by interacting with other extracellular matrix components. In Homo sapiens (Human), this protein is Laminin subunit beta-2 (LAMB2).